Reading from the N-terminus, the 211-residue chain is FMN-dependent NADH:quinone oxidoreductase 2 (211 aa).

Position 102-105 (102-105 (MWNF)) interacts with FMN.

It belongs to the azoreductase type 1 family. As to quaternary structure, homodimer. FMN is required as a cofactor.

The catalysed reaction is 2 a quinone + NADH + H(+) = 2 a 1,4-benzosemiquinone + NAD(+). The enzyme catalyses N,N-dimethyl-1,4-phenylenediamine + anthranilate + 2 NAD(+) = 2-(4-dimethylaminophenyl)diazenylbenzoate + 2 NADH + 2 H(+). Functionally, quinone reductase that provides resistance to thiol-specific stress caused by electrophilic quinones. Its function is as follows. Also exhibits azoreductase activity. Catalyzes the reductive cleavage of the azo bond in aromatic azo compounds to the corresponding amines. The protein is FMN-dependent NADH:quinone oxidoreductase 2 of Bacillus cereus (strain ATCC 14579 / DSM 31 / CCUG 7414 / JCM 2152 / NBRC 15305 / NCIMB 9373 / NCTC 2599 / NRRL B-3711).